The chain runs to 310 residues: p-hydroxybenzoic acid efflux pump subunit AaeA (310 aa).

Residues 12–32 traverse the membrane as a helical segment; it reads AITVVLVILAFIAIFNAWVYY.

It belongs to the membrane fusion protein (MFP) (TC 8.A.1) family.

The protein resides in the cell inner membrane. Functionally, forms an efflux pump with AaeB. The protein is p-hydroxybenzoic acid efflux pump subunit AaeA of Escherichia coli O139:H28 (strain E24377A / ETEC).